The following is a 151-amino-acid chain: Nucleoside diphosphate kinase (151 aa).

ATP is bound by residues Lys-10, Phe-58, Arg-86, Thr-92, Arg-103, and Asn-113. His-116 serves as the catalytic Pros-phosphohistidine intermediate.

It belongs to the NDK family. Homotetramer. Mg(2+) serves as cofactor.

Its subcellular location is the cytoplasm. The enzyme catalyses dZDP + ATP = dZTP + ADP. It catalyses the reaction a 2'-deoxyribonucleoside 5'-diphosphate + ATP = a 2'-deoxyribonucleoside 5'-triphosphate + ADP. The catalysed reaction is a ribonucleoside 5'-diphosphate + ATP = a ribonucleoside 5'-triphosphate + ADP. It participates in purine metabolism. Major role in the synthesis of nucleoside triphosphates other than ATP. The ATP gamma phosphate is transferred to the NDP beta phosphate via a ping-pong mechanism, using a phosphorylated active-site intermediate. In terms of biological role, (Microbial infection) Catalyzes the phosphorylation of dZDP to dZTP, when the bacterium is infected by a phage that produces the substrate for the synthesis of dZTP (2- amino-2'-deoxyadenosine 5'-triphosphate), which is then used by the phage as a DNA polymerase substrate. The polypeptide is Nucleoside diphosphate kinase (Synechococcus sp. (strain CC9605)).